The primary structure comprises 397 residues: HTH-type transcriptional regulator GalR (397 aa).

HTH lysR-type domains follow at residues proline 7–threonine 64 and phenylalanine 99–threonine 156. 2 DNA-binding regions (H-T-H motif) span residues valine 24 to alanine 43 and methionine 116 to lysine 135.

The protein belongs to the LysR transcriptional regulatory family.

In terms of biological role, transcriptional regulator for the galBCD and galTAP operons, encoding genes of the gallate degradation pathway. The sequence is that of HTH-type transcriptional regulator GalR (galR) from Pseudomonas putida (strain ATCC 47054 / DSM 6125 / CFBP 8728 / NCIMB 11950 / KT2440).